The sequence spans 969 residues: Translation initiation factor IF-2 (969 aa).

Positions 50–370 (SFASKSAPAN…QAPSVGGVRL (321 aa)) are disordered. Residues 54–76 (KSAPANGAKPGPAASARPGAKPT) show a composition bias toward low complexity. Residues 77–87 (PGGPRPGPRTP) show a composition bias toward pro residues. Over residues 88–102 (APAASAPQAPAEQTA) the composition is skewed to low complexity. Over residues 112 to 124 (AVKPGPAPTPARP) the composition is skewed to pro residues. The span at 125 to 164 (AAPEAPAAKAAPEAPAQRPTPGGPRPGQQQQRPGAPAQGG) shows a compositional bias: low complexity. Residues 240 to 267 (PGGPRPSPGSMPPRPNPGAMPQRTPRPG) are compositionally biased toward pro residues. A compositionally biased stretch (gly residues) spans 269–340 (SAGGRPGRPG…GAAGAFGRPG (72 aa)). Residues 344–353 (RRGRKSKRQK) are compositionally biased toward basic residues. The tr-type G domain occupies 465–636 (VRPPVVTVMG…AVLLTADAAL (172 aa)). A G1 region spans residues 474-481 (GHVDHGKT). 474 to 481 (GHVDHGKT) lines the GTP pocket. A G2 region spans residues 499–503 (GITQH). Residues 524–527 (DTPG) are G3. GTP-binding positions include 524–528 (DTPGH) and 578–581 (NKID). Positions 578–581 (NKID) are G4. A G5 region spans residues 614 to 616 (SAK).

Belongs to the TRAFAC class translation factor GTPase superfamily. Classic translation factor GTPase family. IF-2 subfamily.

The protein resides in the cytoplasm. One of the essential components for the initiation of protein synthesis. Protects formylmethionyl-tRNA from spontaneous hydrolysis and promotes its binding to the 30S ribosomal subunits. Also involved in the hydrolysis of GTP during the formation of the 70S ribosomal complex. This is Translation initiation factor IF-2 from Nocardia farcinica (strain IFM 10152).